The sequence spans 481 residues: Beta-amyrin 28-monooxygenase (481 aa).

Residues 4 to 24 form a helical membrane-spanning segment; sequence FYVPLLSLFVLFISLSFHFLF. C428 is a heme binding site.

It belongs to the cytochrome P450 family. It depends on heme as a cofactor. Mostly expressed in roots, and, to a lower extent, in stems and leaves. Accumulates only in the rhizome of plants.

It is found in the membrane. It carries out the reaction beta-amyrin + 3 reduced [NADPH--hemoprotein reductase] + 3 O2 = oleanolate + 3 oxidized [NADPH--hemoprotein reductase] + 4 H2O + 4 H(+). Its pathway is secondary metabolite biosynthesis; terpenoid biosynthesis. In terms of biological role, component of the oleanane-type triterpene saponins (e.g. ginsenosides or panaxosides) biosynthetic pathway. Catalyzes the carboxylation of beta-amyrin at the C-28 position to form oleanolic acid during ginsenoside biosynthesis, a class of tetracyclic triterpenoid saponins. This is Beta-amyrin 28-monooxygenase from Panax ginseng (Korean ginseng).